Reading from the N-terminus, the 345-residue chain is MDIFREIASSMKGENVFISPASISSVLTILYYGANGSTAEQLSKYVEKEENMDKVSAQNISFKSINKVYGRYSAVFKDSFLRKIGDKFQTVDFTDCRTIDAINKCVDIFTEGKINPLLDEQLSPDTCLLAISAVYFKAKWLTPFEKEFTSDYPFYVSPTEMVDVSMMSMYGKAFNHASVKESFGNFSIIELPYVGDTSMMVILPDKIDGLESIEQNLTDTNFKKWCNSLEATFIDVHIPKFKVTGSYNLVDTLVKSGLTEVFGSTGDYSNMCNLDVSVDAMIHKTYIDVNEEYTEAAAATSVLVADCASTVTNEFCADHPFIYVIRHVDGKILFVGRYCSPTTNC.

This sequence belongs to the serpin family. Poxviruses subfamily.

It localises to the host cytoplasm. Viral serpin that inhibits both cysteine and serine proteinases involved in the regulation of host inflammatory and apoptosis processes. Major anti-apoptotic protein which inhibits both intrinsic and extrinsic pathways and strongly cleaves host CASP1 and CASP8 but is a rather poor inhibitor of host CASP3. Prevents the proteolytic activity of host interleukin-1-beta converting enzyme (ICE) and ICE-like enzymes. Can also block apoptosis through host tumor necrosis factor (TNF) receptor. The inhibition of host ICE is an example of a 'cross-class' interaction, in which a serpin inhibits a non-serine proteinase. Also inhibits granzyme B. The chain is Serine proteinase inhibitor 2 (OPG199) from Rabbitpox virus (strain Utrecht) (RPV).